The primary structure comprises 201 residues: Recombination protein RecR (201 aa).

The C4-type zinc finger occupies 57–72; that stretch reads CADCRTFTEQEHCTIC. The Toprim domain maps to 81–176; the sequence is GQICVVESPA…LASRIAHGVP (96 aa).

This sequence belongs to the RecR family.

In terms of biological role, may play a role in DNA repair. It seems to be involved in an RecBC-independent recombinational process of DNA repair. It may act with RecF and RecO. The protein is Recombination protein RecR of Yersinia enterocolitica serotype O:8 / biotype 1B (strain NCTC 13174 / 8081).